The sequence spans 128 residues: Insulin-like 3 (128 aa).

Positions Met-1–Ala-15 are cleaved as a signal peptide. Cystine bridges form between Cys-29–Cys-113, Cys-41–Cys-126, and Cys-112–Cys-117. The segment covering Ala-81 to His-94 has biased composition (low complexity). The segment at Ala-81–Arg-101 is disordered.

It belongs to the insulin family. In terms of assembly, heterodimer of a B chain and an A chain linked by two disulfide bonds. In terms of tissue distribution, expressed in Leydig cells of the testis, and weakly in the theca interna cells of antral follicles and the corpus luteum of the ovary.

The protein localises to the secreted. Functionally, seems to play a role in testicular function. May be a trophic hormone with a role in testicular descent in fetal life. Is a ligand for LGR8 receptor. In Rattus norvegicus (Rat), this protein is Insulin-like 3 (Insl3).